The primary structure comprises 384 residues: Alcohol dehydrogenase class-3 (384 aa).

C48, H70, C100, C103, C106, C114, and C177 together coordinate Zn(2+).

Belongs to the zinc-containing alcohol dehydrogenase family. Class-III subfamily. As to quaternary structure, homodimer. Requires Zn(2+) as cofactor.

The protein localises to the cytoplasm. The catalysed reaction is a primary alcohol + NAD(+) = an aldehyde + NADH + H(+). It catalyses the reaction a secondary alcohol + NAD(+) = a ketone + NADH + H(+). The enzyme catalyses S-(hydroxymethyl)glutathione + NADP(+) = S-formylglutathione + NADPH + H(+). It carries out the reaction S-(hydroxymethyl)glutathione + NAD(+) = S-formylglutathione + NADH + H(+). Its function is as follows. Class-III ADH is remarkably ineffective in oxidizing ethanol, but it readily catalyzes the oxidation of long-chain primary alcohols and the oxidation of S-(hydroxymethyl) glutathione. Plays a role in the calcium flux to the cytoplasm in the ASJ sensory neurons upon removal of a nitric oxide stimulus. This Caenorhabditis elegans protein is Alcohol dehydrogenase class-3.